A 985-amino-acid polypeptide reads, in one-letter code: Ankyrin repeat domain-containing protein 24 (985 aa).

ANK repeat units lie at residues E52–S81, A85–I114, S118–P147, S151–D180, and Q184–I213. 5 disordered regions span residues R243–A293, I311–E360, Q386–E412, Y476–Q503, and D594–M614. Residues R291–E488 adopt a coiled-coil conformation. Basic and acidic residues-rich tracts occupy residues I311–L326 and E349–E360.

Homodimer. Interacts (via C-terminal domain) with TRIOBP (via C-terminal domain) isoform 4; recruits TRIOBP isoform 4 to stereocilia rootlets. As to expression, expressed in vestibular hair bundles.

It localises to the cell membrane. Its subcellular location is the cell projection. The protein resides in the stereocilium. Functionally, component of the stereocilia rootlet in hair cells of inner ear. Bridges the apical plasma membrane with the lower rootlet and maintains normal distribution of TRIOBP, thereby reinforcing stereocilia insertion points and organizing rootlets for hearing with long-term resilience. The chain is Ankyrin repeat domain-containing protein 24 (Ankrd24) from Mus musculus (Mouse).